Here is a 91-residue protein sequence, read N- to C-terminus: UPF0250 protein BB0170 (91 aa).

It belongs to the UPF0250 family.

This is UPF0250 protein BB0170 from Bordetella bronchiseptica (strain ATCC BAA-588 / NCTC 13252 / RB50) (Alcaligenes bronchisepticus).